A 114-amino-acid polypeptide reads, in one-letter code: Large ribosomal subunit protein bL19 (114 aa).

The protein belongs to the bacterial ribosomal protein bL19 family.

This protein is located at the 30S-50S ribosomal subunit interface and may play a role in the structure and function of the aminoacyl-tRNA binding site. The sequence is that of Large ribosomal subunit protein bL19 from Clavibacter sepedonicus (Clavibacter michiganensis subsp. sepedonicus).